The sequence spans 402 residues: Probable tRNA sulfurtransferase (402 aa).

The THUMP domain occupies Glu-61–Val-166. Residues Met-184–Leu-185, His-209–Phe-210, Arg-266, Gly-288, and Gln-297 contribute to the ATP site.

The protein belongs to the ThiI family.

The protein resides in the cytoplasm. It catalyses the reaction [ThiI sulfur-carrier protein]-S-sulfanyl-L-cysteine + a uridine in tRNA + 2 reduced [2Fe-2S]-[ferredoxin] + ATP + H(+) = [ThiI sulfur-carrier protein]-L-cysteine + a 4-thiouridine in tRNA + 2 oxidized [2Fe-2S]-[ferredoxin] + AMP + diphosphate. It carries out the reaction [ThiS sulfur-carrier protein]-C-terminal Gly-Gly-AMP + S-sulfanyl-L-cysteinyl-[cysteine desulfurase] + AH2 = [ThiS sulfur-carrier protein]-C-terminal-Gly-aminoethanethioate + L-cysteinyl-[cysteine desulfurase] + A + AMP + 2 H(+). The protein operates within cofactor biosynthesis; thiamine diphosphate biosynthesis. Functionally, catalyzes the ATP-dependent transfer of a sulfur to tRNA to produce 4-thiouridine in position 8 of tRNAs, which functions as a near-UV photosensor. Also catalyzes the transfer of sulfur to the sulfur carrier protein ThiS, forming ThiS-thiocarboxylate. This is a step in the synthesis of thiazole, in the thiamine biosynthesis pathway. The sulfur is donated as persulfide by IscS. This is Probable tRNA sulfurtransferase from Macrococcus caseolyticus (strain JCSC5402) (Macrococcoides caseolyticum).